A 344-amino-acid chain; its full sequence is Protein-glutamate methylesterase/protein-glutamine glutaminase (344 aa).

Residues 7 to 124 (RVLVVDDSAF…SLTFRQVAPE (118 aa)) form the Response regulatory domain. Asp-58 is subject to 4-aspartylphosphate. The CheB-type methylesterase domain maps to 154-344 (PAVSGKIVVI…KIPEKLIELV (191 aa)). Active-site residues include Ser-166, His-193, and Asp-289.

It belongs to the CheB family. Phosphorylated by CheA. Phosphorylation of the N-terminal regulatory domain activates the methylesterase activity.

Its subcellular location is the cytoplasm. It catalyses the reaction [protein]-L-glutamate 5-O-methyl ester + H2O = L-glutamyl-[protein] + methanol + H(+). It carries out the reaction L-glutaminyl-[protein] + H2O = L-glutamyl-[protein] + NH4(+). Its function is as follows. Involved in chemotaxis. Part of a chemotaxis signal transduction system that modulates chemotaxis in response to various stimuli. Catalyzes the demethylation of specific methylglutamate residues introduced into the chemoreceptors (methyl-accepting chemotaxis proteins or MCP) by CheR. Also mediates the irreversible deamidation of specific glutamine residues to glutamic acid. This chain is Protein-glutamate methylesterase/protein-glutamine glutaminase, found in Thermotoga maritima (strain ATCC 43589 / DSM 3109 / JCM 10099 / NBRC 100826 / MSB8).